A 391-amino-acid chain; its full sequence is Nucleosome assembly protein 1-like 1 (391 aa).

Residues M1–S10 are compositionally biased toward basic and acidic residues. The segment at M1 to K32 is disordered. A2 bears the N-acetylalanine mark. S10 carries the phosphoserine modification. The segment covering E11–G28 has biased composition (acidic residues). A phosphothreonine mark is found at T62 and T64. The residue at position 69 (S69) is a Phosphoserine. Residue K116 is modified to N6-acetyllysine. Residues Y125 to A150 carry the NAP1L motif motif. Positions E131–S143 are enriched in acidic residues. The tract at residues E131–D163 is disordered. S143 carries the phosphoserine modification. A compositionally biased stretch (basic and acidic residues) spans E144–D163. The Nuclear localization signal signature appears at I273–H279. A compositionally biased stretch (acidic residues) spans A346–D376. The interval A346–Q391 is disordered. A 5-glutamyl polyglycine mark is found at E359 and E360. A compositionally biased stretch (basic and acidic residues) spans Y377–Q391. C388 bears the Cysteine methyl ester mark. C388 is lipidated: S-farnesyl cysteine. Residues K389–Q391 constitute a propeptide, removed in mature form.

The protein belongs to the nucleosome assembly protein (NAP) family. Homodimer. The dimer binds strongly and sequentially to single and double H2A-H2B heterodimers. Interacts with ERCC6; this interaction increases ERCC6 processivity. Interacts with RAD54. Interacts with SETD1A. Post-translationally, polyglycylated by TTLL10 on glutamate residues, resulting in polyglycine chains on the gamma-carboxyl group. Both polyglutamylation and polyglycylation modifications can coexist on the same protein on adjacent residues, and lowering polyglycylation levels increases polyglutamylation, and reciprocally. In terms of processing, polyglutamylated by TTLL4 on glutamate residues, resulting in polyglutamate chains on the gamma-carboxyl group. Both polyglutamylation and polyglycylation modifications can coexist on the same protein on adjacent residues, and lowering polyglycylation levels increases polyglutamylation, and reciprocally. As to expression, highly expressed in the brain (at protein level). High expression in cerebral cortex, not in cerebellar cortex.

It is found in the nucleus. The protein resides in the cytoplasm. The protein localises to the melanosome. In terms of biological role, histone chaperone that plays a role in the nuclear import of H2A-H2B and nucleosome assembly. Also participates in several important DNA repair mechanisms: greatly enhances ERCC6-mediated chromatin remodeling which is essential for transcription-coupled nucleotide excision DNA repair. Also stimulates homologous recombination (HR) by RAD51 and RAD54 which is essential in mitotic DNA double strand break (DSB) repair. Plays a key role in the regulation of embryonic neurogenesis. Promotes the proliferation of neural progenitors and inhibits neuronal differentiation during cortical development. Regulates neurogenesis via the modulation of RASSF10; regulates RASSF10 expression by promoting SETD1A-mediated H3K4 methylation at the RASSF10 promoter. This chain is Nucleosome assembly protein 1-like 1 (Nap1l1), found in Mus musculus (Mouse).